The following is a 322-amino-acid chain: Methionyl-tRNA formyltransferase (322 aa).

112 to 115 (SLLP) contacts (6S)-5,6,7,8-tetrahydrofolate.

The protein belongs to the Fmt family.

The catalysed reaction is L-methionyl-tRNA(fMet) + (6R)-10-formyltetrahydrofolate = N-formyl-L-methionyl-tRNA(fMet) + (6S)-5,6,7,8-tetrahydrofolate + H(+). Functionally, attaches a formyl group to the free amino group of methionyl-tRNA(fMet). The formyl group appears to play a dual role in the initiator identity of N-formylmethionyl-tRNA by promoting its recognition by IF2 and preventing the misappropriation of this tRNA by the elongation apparatus. The polypeptide is Methionyl-tRNA formyltransferase (Synechococcus sp. (strain JA-3-3Ab) (Cyanobacteria bacterium Yellowstone A-Prime)).